A 1486-amino-acid chain; its full sequence is Chromosome partition protein MukB (1486 aa).

An ATP-binding site is contributed by 34-41 (GGNGAGKS). 3 coiled-coil regions span residues 326-418 (LEAD…QYNQ), 444-480 (LETF…QAYQ), and 509-603 (RHLA…RAPV). The tract at residues 666–783 (PGGSEDQRLN…EVPLFGRAAR (118 aa)) is flexible hinge. Coiled coils occupy residues 835-923 (EAEI…AKLE), 977-1115 (EMLS…TAKA), and 1209-1266 (VEAI…QNVS).

This sequence belongs to the SMC family. MukB subfamily. Homodimerization via its hinge domain. Binds to DNA via its C-terminal region. Interacts, and probably forms a ternary complex, with MukE and MukF via its C-terminal region. The complex formation is stimulated by calcium or magnesium. Interacts with tubulin-related protein FtsZ.

The protein localises to the cytoplasm. It localises to the nucleoid. In terms of biological role, plays a central role in chromosome condensation, segregation and cell cycle progression. Functions as a homodimer, which is essential for chromosome partition. Involved in negative DNA supercoiling in vivo, and by this means organize and compact chromosomes. May achieve or facilitate chromosome segregation by condensation DNA from both sides of a centrally located replisome during cell division. The protein is Chromosome partition protein MukB of Escherichia coli (strain K12 / MC4100 / BW2952).